A 132-amino-acid chain; its full sequence is Small ribosomal subunit protein uS8 (132 aa).

It belongs to the universal ribosomal protein uS8 family. Part of the 30S ribosomal subunit. Contacts proteins S5 and S12.

Functionally, one of the primary rRNA binding proteins, it binds directly to 16S rRNA central domain where it helps coordinate assembly of the platform of the 30S subunit. The protein is Small ribosomal subunit protein uS8 of Borreliella burgdorferi (strain ZS7) (Borrelia burgdorferi).